A 429-amino-acid chain; its full sequence is Endo-1,4-beta-xylanase 1 (429 aa).

Positions 1 to 19 are cleaved as a signal peptide; sequence MQTKSILTAALLAAAPASA. Positions 43–336 constitute a GH10 domain; that stretch reads NSDQQYNRIL…KPAWTSISSV (294 aa). The Proton donor role is filled by Glu150. Glu257 functions as the Nucleophile in the catalytic mechanism. Residues Cys286 and Cys292 are joined by a disulfide bond. Positions 364-395 are disordered; that stretch reads TTPPPISSPIVPSTTTTSAVPTTTVSPPEPEQ. The segment covering 371 to 389 has biased composition (low complexity); that stretch reads SPIVPSTTTTSAVPTTTVS. The CBM1 domain occupies 393–429; that stretch reads PEQTRWGQCGGIGWNGPTKCQSPWTCTRLNDWYFQCL.

Belongs to the glycosyl hydrolase 10 (cellulase F) family.

The protein resides in the secreted. It carries out the reaction Endohydrolysis of (1-&gt;4)-beta-D-xylosidic linkages in xylans.. It functions in the pathway glycan degradation; xylan degradation. In terms of biological role, endo-1,4-beta-xylanase involved in the hydrolysis of xylan, a major structural heterogeneous polysaccharide found in plant biomass representing the second most abundant polysaccharide in the biosphere, after cellulose. This chain is Endo-1,4-beta-xylanase 1, found in Humicola insolens (Soft-rot fungus).